A 274-amino-acid polypeptide reads, in one-letter code: uncharacterized protein (274 aa).

It localises to the plastid. It is found in the chloroplast. This is an uncharacterized protein from Euglena gracilis.